Consider the following 306-residue polypeptide: Pantothenate kinase (306 aa).

Residue 91–98 participates in ATP binding; sequence GSVAVGKS.

This sequence belongs to the prokaryotic pantothenate kinase family.

The protein resides in the cytoplasm. It catalyses the reaction (R)-pantothenate + ATP = (R)-4'-phosphopantothenate + ADP + H(+). It functions in the pathway cofactor biosynthesis; coenzyme A biosynthesis; CoA from (R)-pantothenate: step 1/5. This is Pantothenate kinase from Streptococcus pneumoniae (strain Hungary19A-6).